Reading from the N-terminus, the 249-residue chain is Aspartate/glutamate leucyltransferase (249 aa).

The protein belongs to the R-transferase family. Bpt subfamily.

It is found in the cytoplasm. It carries out the reaction N-terminal L-glutamyl-[protein] + L-leucyl-tRNA(Leu) = N-terminal L-leucyl-L-glutamyl-[protein] + tRNA(Leu) + H(+). The enzyme catalyses N-terminal L-aspartyl-[protein] + L-leucyl-tRNA(Leu) = N-terminal L-leucyl-L-aspartyl-[protein] + tRNA(Leu) + H(+). Functionally, functions in the N-end rule pathway of protein degradation where it conjugates Leu from its aminoacyl-tRNA to the N-termini of proteins containing an N-terminal aspartate or glutamate. This chain is Aspartate/glutamate leucyltransferase, found in Brucella abortus (strain 2308).